A 454-amino-acid chain; its full sequence is Phosphoglucosamine mutase (454 aa).

S101 functions as the Phosphoserine intermediate in the catalytic mechanism. S101, D243, D245, and D247 together coordinate Mg(2+). A Phosphoserine modification is found at S101.

It belongs to the phosphohexose mutase family. Mg(2+) is required as a cofactor. Post-translationally, activated by phosphorylation.

It catalyses the reaction alpha-D-glucosamine 1-phosphate = D-glucosamine 6-phosphate. Its function is as follows. Catalyzes the conversion of glucosamine-6-phosphate to glucosamine-1-phosphate. This is Phosphoglucosamine mutase from Geobacter sp. (strain M21).